The following is a 156-amino-acid chain: Transcription antitermination protein NusB (156 aa).

It belongs to the NusB family.

Involved in transcription antitermination. Required for transcription of ribosomal RNA (rRNA) genes. Binds specifically to the boxA antiterminator sequence of the ribosomal RNA (rrn) operons. This Bartonella quintana (strain Toulouse) (Rochalimaea quintana) protein is Transcription antitermination protein NusB.